Consider the following 438-residue polypeptide: 3-phosphoshikimate 1-carboxyvinyltransferase 1 (438 aa).

Residues Lys30, Ser31, and Arg35 each coordinate 3-phosphoshikimate. Lys30 is a phosphoenolpyruvate binding site. Positions 104 and 132 each coordinate phosphoenolpyruvate. 3-phosphoshikimate-binding residues include Ser178, Ser179, Gln180, Ser207, Glu326, and His353. Gln180 is a phosphoenolpyruvate binding site. Catalysis depends on Glu326, which acts as the Proton acceptor. Positions 357, 398, and 423 each coordinate phosphoenolpyruvate.

It belongs to the EPSP synthase family. As to quaternary structure, monomer.

The protein resides in the cytoplasm. The enzyme catalyses 3-phosphoshikimate + phosphoenolpyruvate = 5-O-(1-carboxyvinyl)-3-phosphoshikimate + phosphate. It participates in metabolic intermediate biosynthesis; chorismate biosynthesis; chorismate from D-erythrose 4-phosphate and phosphoenolpyruvate: step 6/7. Its function is as follows. Catalyzes the transfer of the enolpyruvyl moiety of phosphoenolpyruvate (PEP) to the 5-hydroxyl of shikimate-3-phosphate (S3P) to produce enolpyruvyl shikimate-3-phosphate and inorganic phosphate. This Streptomyces coelicolor (strain ATCC BAA-471 / A3(2) / M145) protein is 3-phosphoshikimate 1-carboxyvinyltransferase 1.